A 523-amino-acid polypeptide reads, in one-letter code: Probable methylmalonate-semialdehyde/malonate-semialdehyde dehydrogenase [acylating], mitochondrial (523 aa).

Residues 1–22 (MLSRLARVQPKCQQLAHFSTSK) constitute a mitochondrion transit peptide. F175, K199, and E202 together coordinate NAD(+). C307 serves as the catalytic Nucleophile. Residue E407 participates in NAD(+) binding.

This sequence belongs to the aldehyde dehydrogenase family. Homodimer.

The protein resides in the mitochondrion. It catalyses the reaction 2-methyl-3-oxopropanoate + NAD(+) + CoA + H2O = propanoyl-CoA + hydrogencarbonate + NADH + H(+). It carries out the reaction 3-oxopropanoate + NAD(+) + CoA + H2O = hydrogencarbonate + acetyl-CoA + NADH + H(+). Probable malonate and methylmalonate semialdehyde dehydrogenase involved in the catabolism of valine, thymine, and compounds catabolized by way of beta-alanine, including uracil and cytidine. The chain is Probable methylmalonate-semialdehyde/malonate-semialdehyde dehydrogenase [acylating], mitochondrial (alh-8) from Caenorhabditis elegans.